Consider the following 92-residue polypeptide: UPF0358 protein SH1840 (92 aa).

This sequence belongs to the UPF0358 family.

The sequence is that of UPF0358 protein SH1840 from Staphylococcus haemolyticus (strain JCSC1435).